We begin with the raw amino-acid sequence, 273 residues long: Dermonecrotic toxin SdSicTox-betaIIB1bxiv (273 aa).

The active site involves His-4. Mg(2+) is bound by residues Glu-24 and Asp-26. The Nucleophile role is filled by His-40. Intrachain disulfides connect Cys-44–Cys-50 and Cys-46–Cys-189. Residue Asp-84 coordinates Mg(2+).

It belongs to the arthropod phospholipase D family. Class II subfamily. It depends on Mg(2+) as a cofactor. Expressed by the venom gland.

The protein localises to the secreted. It carries out the reaction an N-(acyl)-sphingosylphosphocholine = an N-(acyl)-sphingosyl-1,3-cyclic phosphate + choline. The catalysed reaction is an N-(acyl)-sphingosylphosphoethanolamine = an N-(acyl)-sphingosyl-1,3-cyclic phosphate + ethanolamine. It catalyses the reaction a 1-acyl-sn-glycero-3-phosphocholine = a 1-acyl-sn-glycero-2,3-cyclic phosphate + choline. The enzyme catalyses a 1-acyl-sn-glycero-3-phosphoethanolamine = a 1-acyl-sn-glycero-2,3-cyclic phosphate + ethanolamine. Dermonecrotic toxins cleave the phosphodiester linkage between the phosphate and headgroup of certain phospholipids (sphingolipid and lysolipid substrates), forming an alcohol (often choline) and a cyclic phosphate. This toxin acts on sphingomyelin (SM). It may also act on ceramide phosphoethanolamine (CPE), lysophosphatidylcholine (LPC) and lysophosphatidylethanolamine (LPE), but not on lysophosphatidylserine (LPS), and lysophosphatidylglycerol (LPG). It acts by transphosphatidylation, releasing exclusively cyclic phosphate products as second products. Induces dermonecrosis, hemolysis, increased vascular permeability, edema, inflammatory response, and platelet aggregation. This is Dermonecrotic toxin SdSicTox-betaIIB1bxiv from Sicarius cf. damarensis (strain GJB-2008) (Six-eyed sand spider).